The following is a 1097-amino-acid chain: RE1-silencing transcription factor (1097 aa).

The segment at 32–122 (DLHDLSKAEL…SLELSVVEPQ (91 aa)) is interaction with SIN3A. The interaction with SIN3B stretch occupies residues 43-57 (APQLIMLANVALTGE). Disordered stretches follow at residues 83 to 103 (NFSD…KGEP) and 127 to 159 (ASGA…TKPF). The span at 86–96 (DSEEGEGLEES) shows a compositional bias: acidic residues. An interaction with ZFP90 region spans residues 145 to 418 (PGAEDKGKSS…KSKHPTCPNK (274 aa)). Residues 159–181 (FRCKPCQYEAESEEQFVHHIRVH) form a C2H2-type 1 zinc finger. A required for binding to the neuron-restrictive silencer element region spans residues 201–212 (SGSSTAEEGDFS). C2H2-type zinc fingers lie at residues 216-238 (IRCD…LKHH), 248-270 (YKCI…LRNH), 276-298 (YTCG…VRTH), 304-326 (YKCE…MRTH), 332-355 (FKCD…RQVH), 361-383 (LNCP…VELH), and 389-412 (FNCP…KSKH). Residues 452–479 (KIKGDVAGKKNEKSVKAEKRDVSKEKKP) show a composition bias toward basic and acidic residues. Disordered regions lie at residues 452–642 (KIKG…MEGA), 774–837 (KEPV…EQVL), 853–938 (ESVS…NGKH), and 961–1049 (GINS…NAKE). Residues 480 to 490 (SNNVSVIQVTT) are compositionally biased toward polar residues. 2 stretches are compositionally biased toward basic and acidic residues: residues 495–504 (SVTEVKEMDV) and 559–570 (PKGDSKVEENKK). Residues 577–593 (KSTKKKTLKNKSSKKSS) show a composition bias toward basic residues. Positions 803–836 (PPLHMEPISKKPPLRKDKKEKSNMQSERARKEQV) are enriched in basic and acidic residues. At S864 the chain carries Phosphoserine. Residues 913-930 (INESTHISSSGQNLNTPE) show a composition bias toward polar residues. Position 971 is a phosphoserine (S971). An interaction with RCOR1 region spans residues 1009–1087 (EGIHSHEGSD…HLNRHLVNVY (79 aa)). The C2H2-type 9 zinc-finger motif lies at 1060-1082 (FVCIFCDRSFRKGKDYSKHLNRH).

In terms of assembly, isoform 1 and isoform 3 form heterodimers. Isoform 3: Forms homodimers and homooligomers; binds to the neuron-restrictive silencer element (NRSE) as monomer. Interacts with SIN3A, SIN3B and RCOR1. Interacts with CDYL. Interacts with EHMT1 and EHMT2 only in the presence of CDYL. Part of a complex containing at least CDYL, REST, WIZ, SETB1, EHMT1 and EHMT2. Interacts (via zinc-finger DNA-binding domain) with ZFP90 (via N- and C-termini); the interaction inhibits REST repressor activity. Interacts (via C2H2-type zinc finger 5) with PRICKLE1. Interacts with FBXW11 and BTRC. Interacts with USP7. Post-translationally, O-glycosylated. In terms of processing, phosphorylated; phosphorylation is required for ubiquitination. Ubiquitinated; ubiquitination is mediated by BTRC and leads to proteasomal degradation in G2 phase. Ubiquitination increases during neuronal differentiation. Deubiquitinated by USP7; leading to its stabilization and promoting the maintenance of neural progenitor cells. In terms of tissue distribution, expressed in neurons of the prefrontal cortex, in hippocampal pyramidal neurons, dentate gyrus granule neurons and cerebellar Purkinje and granule neurons (at protein level). Expressed in dopaminergic neurons of the substantia nigra (at protein level). Expressed in neural progenitor cells (at protein level). In patients suffering from Alzheimer disease, frontotemporal dementia or dementia with Lewy bodies, decreased nuclear levels have been observed in neurons of the prefrontal cortex and the hippocampus, but not in neurons of the dentate gyrus and cerebellum (at protein level). In patients with Parkinson disease or dementia with Lewy bodies, decreased nuclear levels have been observed in dopaminergic neurons and in cortical neurons and localization to Lewy bodies and pale bodies was detected (at protein level). Expressed at higher levels in weakly invasive breast cancer cell lines and at lower levels in highly invasive breast cancer lines (at protein level). Ubiquitous. Expressed at higher levels in the tissues of the lymphocytic compartment, including spleen, thymus, peripheral blood lymphocytes and ovary.

The protein resides in the nucleus. It localises to the cytoplasm. Functionally, transcriptional repressor which binds neuron-restrictive silencer element (NRSE) and represses neuronal gene transcription in non-neuronal cells. Restricts the expression of neuronal genes by associating with two distinct corepressors, SIN3A and RCOR1, which in turn recruit histone deacetylase to the promoters of REST-regulated genes. Mediates repression by recruiting the BHC complex at RE1/NRSE sites which acts by deacetylating and demethylating specific sites on histones, thereby acting as a chromatin modifier. Transcriptional repression by REST-CDYL via the recruitment of histone methyltransferase EHMT2 may be important in transformation suppression. Represses the expression of SRRM4 in non-neural cells to prevent the activation of neural-specific splicing events and to prevent production of REST isoform 3. Repressor activity may be inhibited by forming heterodimers with isoform 3, thereby preventing binding to NRSE or binding to corepressors and leading to derepression of target genes. Also maintains repression of neuronal genes in neural stem cells, and allows transcription and differentiation into neurons by dissociation from RE1/NRSE sites of target genes. Thereby is involved in maintaining the quiescent state of adult neural stem cells and preventing premature differentiation into mature neurons. Plays a role in the developmental switch in synaptic NMDA receptor composition during postnatal development, by repressing GRIN2B expression and thereby altering NMDA receptor properties from containing primarily GRIN2B to primarily GRIN2A subunits. Acts as a regulator of osteoblast differentiation. Key repressor of gene expression in hypoxia; represses genes in hypoxia by direct binding to an RE1/NRSE site on their promoter regions. May also function in stress resistance in the brain during aging; possibly by regulating expression of genes involved in cell death and in the stress response. Repressor of gene expression in the hippocampus after ischemia by directly binding to RE1/NRSE sites and recruiting SIN3A and RCOR1 to promoters of target genes, thereby promoting changes in chromatin modifications and ischemia-induced cell death. After ischemia, might play a role in repression of miR-132 expression in hippocampal neurons, thereby leading to neuronal cell death. Negatively regulates the expression of SRRM3 in breast cancer cell lines. Its function is as follows. Binds to the 3' region of the neuron-restrictive silencer element (NRSE), with lower affinity than full-length REST isoform 1. Exhibits weaker repressor activity compared to isoform 1. May negatively regulate the repressor activity of isoform 1 by binding to isoform 1, thereby preventing its binding to NRSE and leading to derepression of target genes. However, in another study, does not appear to be implicated in repressor activity of a NRSE motif-containing reporter construct nor in inhibitory activity on the isoform 1 transcriptional repressor activity. Post-transcriptional inactivation of REST by SRRM4-dependent alternative splicing into isoform 3 is required in mechanosensory hair cells in the inner ear for derepression of neuronal genes and hearing. The sequence is that of RE1-silencing transcription factor (REST) from Homo sapiens (Human).